The sequence spans 301 residues: Lipoyl synthase (301 aa).

[4Fe-4S] cluster is bound by residues Cys53, Cys58, Cys64, Cys79, Cys83, Cys86, and Ser290. The Radical SAM core domain occupies 65 to 279; sequence WSRKTATYML…RIYGKSIGFK (215 aa).

This sequence belongs to the radical SAM superfamily. Lipoyl synthase family. [4Fe-4S] cluster serves as cofactor.

The protein localises to the cytoplasm. The enzyme catalyses [[Fe-S] cluster scaffold protein carrying a second [4Fe-4S](2+) cluster] + N(6)-octanoyl-L-lysyl-[protein] + 2 oxidized [2Fe-2S]-[ferredoxin] + 2 S-adenosyl-L-methionine + 4 H(+) = [[Fe-S] cluster scaffold protein] + N(6)-[(R)-dihydrolipoyl]-L-lysyl-[protein] + 4 Fe(3+) + 2 hydrogen sulfide + 2 5'-deoxyadenosine + 2 L-methionine + 2 reduced [2Fe-2S]-[ferredoxin]. It functions in the pathway protein modification; protein lipoylation via endogenous pathway; protein N(6)-(lipoyl)lysine from octanoyl-[acyl-carrier-protein]: step 2/2. In terms of biological role, catalyzes the radical-mediated insertion of two sulfur atoms into the C-6 and C-8 positions of the octanoyl moiety bound to the lipoyl domains of lipoate-dependent enzymes, thereby converting the octanoylated domains into lipoylated derivatives. The protein is Lipoyl synthase of Leptospira interrogans serogroup Icterohaemorrhagiae serovar copenhageni (strain Fiocruz L1-130).